We begin with the raw amino-acid sequence, 328 residues long: Malate dehydrogenase (328 aa).

13–19 (GGKGQIA) contacts NAD(+). Residues R94 and R100 each coordinate substrate. Residues N107, Q114, and 131–133 (VGN) contribute to the NAD(+) site. Residues N133 and R164 each coordinate substrate. H189 serves as the catalytic Proton acceptor.

The protein belongs to the LDH/MDH superfamily. MDH type 2 family.

The catalysed reaction is (S)-malate + NAD(+) = oxaloacetate + NADH + H(+). In terms of biological role, catalyzes the reversible oxidation of malate to oxaloacetate. This Chlamydia pneumoniae (Chlamydophila pneumoniae) protein is Malate dehydrogenase.